The chain runs to 1137 residues: Phytochrome C (1137 aa).

Low complexity predominate over residues 1–18; sequence MSSSRSNNRATCSRSSSA. The segment at 1-27 is disordered; the sequence is MSSSRSNNRATCSRSSSARSKHSARVV. Residues 217-400 enclose the GAF domain; it reads NLSLLCDVLV…VFGIQINKEV (184 aa). Cysteine 322 is a binding site for phytochromobilin. PAS domains follow at residues 620–690 and 750–824; these read VTNE…LQGI and IQGD…TKLS. Residues 904 to 1124 form the Histidine kinase domain; it reads YIRQELRNPL…IVLVEFPVAQ (221 aa).

The protein belongs to the phytochrome family. As to quaternary structure, homodimer. In terms of processing, contains one covalently linked phytochromobilin chromophore.

Its function is as follows. Regulatory photoreceptor which exists in two forms that are reversibly interconvertible by light: the Pr form that absorbs maximally in the red region of the spectrum and the Pfr form that absorbs maximally in the far-red region. Photoconversion of Pr to Pfr induces an array of morphogenic responses, whereas reconversion of Pfr to Pr cancels the induction of those responses. Pfr controls the expression of a number of nuclear genes including those encoding the small subunit of ribulose-bisphosphate carboxylase, chlorophyll A/B binding protein, protochlorophyllide reductase, rRNA, etc. It also controls the expression of its own gene(s) in a negative feedback fashion. This is Phytochrome C (PHYC) from Oryza sativa subsp. japonica (Rice).